Here is a 198-residue protein sequence, read N- to C-terminus: Recombination protein RecR (198 aa).

The C4-type zinc finger occupies 57–72 (CSICGRLTDDDPCSIC). Positions 80–175 (TTILVLEDSR…KVTRLARGLA (96 aa)) constitute a Toprim domain.

It belongs to the RecR family.

In terms of biological role, may play a role in DNA repair. It seems to be involved in an RecBC-independent recombinational process of DNA repair. It may act with RecF and RecO. The sequence is that of Recombination protein RecR from Streptococcus pneumoniae (strain 70585).